Consider the following 908-residue polypeptide: MRPAAPGTTPNGASSDIRHQRGVAPIPFGSTNSAIDAHHNSEIRVGRHRAKLDEIRESLKAYEHEAGLLSSHVALGSLATPSSSSVSHSDITNDNAEVMNFSSSSSNAAATTTTVSSAAVSNSNSFRTEGGGHKMRITPMPQRHLMMDTGANETVFRSGKEMIRNGNPSTTISSTPSTTTEESIRIHPAGYRYDMPTPAYHMNNNAPQYSPGYSRPPPPAYDSSPVNTRMTPVATDNYRTHLHMKVHPVVKAPPPNPTMLNHNKNMAPPPPPPAKSTISIETMSEERKADNIQRLYHTSMDKKTASSVVSINVASPHTTKVNVGDSPLPSKSFIIGPRYTADVDRKNFVNYKDELRPDPRLIPSTSDANHEDFRPILFKPRNLEITMKSRAQPPPPQYNQPSEPPPKRVSSPIDRTLLEPYIKNTRRVQPCKPNMLRFYMEQHVERLLQQYKEREKRMKQLEKEMVSAQLPDIMRNKMLGLLQQKESKYTRLRRQKMSKSHFTVISHIGVGAFGKVSLVRKNDTRKVYAMKSLEKADVIMKQQAAHVKAERDILAEADSPWIVRLFFSFQDDACLYFIMEYVPGGDMMTLLIQKGIFEEDLARFYIAELACAIEYVHNVGFIHRDLKPDNILIDQHGHIKLTDFGLCTGLRWTHDRRYYGPENDHHRVDSFSLPPEVAAIDKSVKVLNVRQQTRRITAHSLVGTGNYMAPEVIAKTGHNQSCDWWSTGVILYEMVFGRVPFHDDTPGGTQHRIKNWRNFLDFTYCGNLSKECLMMIQQLICDASSRLGSHGKDVAERTAQVKNHPWFRGIDWVNLRKLRADYIYIPRVTHDEDTSNFETFQDNDRADKPNVRGLHNPAFYEFTYRHFFDTDSVGCPSLRPSRRRSLRPLLENGTFNESVSEEDSSSHI.

The stretch at Glu42–Ser70 forms a coiled coil. Composition is skewed to low complexity over residues Val115–Ser125 and Pro168–Glu181. 4 disordered regions span residues Val115–Lys134, Met162–Ser183, Asn203–Pro225, and Lys388–Pro412. Residues Gln392–Pro404 are compositionally biased toward pro residues. Residues Tyr439–Leu470 are a coiled coil. A Protein kinase domain is found at Phe502–Phe807. Residues Ile508 to Val516 and Lys531 each bind ATP. Asp625 functions as the Proton acceptor in the catalytic mechanism. In terms of domain architecture, AGC-kinase C-terminal spans Arg808 to Gly874.

Belongs to the protein kinase superfamily. AGC Ser/Thr protein kinase family. As to quaternary structure, interacts (via N-terminus) with yap-1 (via WW domain). Mg(2+) is required as a cofactor. Expressed in muscles and epithelial tissues including pharynx, intestine and hypodermis. Expressed in vulval and spermathecal seam cells.

It is found in the cytoplasm. Its subcellular location is the apical cell membrane. The enzyme catalyses L-seryl-[protein] + ATP = O-phospho-L-seryl-[protein] + ADP + H(+). It catalyses the reaction L-threonyl-[protein] + ATP = O-phospho-L-threonyl-[protein] + ADP + H(+). Phosphorylates yap-1 which may negatively regulate yap-1 nuclear localization. Plays an essential role in larval development. Regulates growth, the formation of gut granules, lifespan and cell and body sizes probably in synergy with the TGF-beta sma/mab pathway. Does not appear to regulate apoptosis and proliferation. In addition, may synergize with the TGF-beta daf-7 dauer pathway to regulate entry into the dauer stage. Maintains the cellular integrity of intestinal cells by regulating the localization of apical actin and junctional proteins. The chain is Serine/threonine-protein kinase WARTS homolog from Caenorhabditis elegans.